The following is a 398-amino-acid chain: Autophagy protein 5 (398 aa).

A disordered region spans residues 99–147 (NSNNNNNNNNNNNNNNNNNNNNNNNNNNNNNNNNNNNNNNNNNNNNNNN). K187 participates in a covalent cross-link: Glycyl lysine isopeptide (Lys-Gly) (interchain with G-Cter in ATG12). The interval 292-321 (NNNNINNNSPPLSPNSNNNNNNNNVDNSIE) is disordered.

It belongs to the ATG5 family. Conjugated to atg12; which is essential for autophagy.

It localises to the cytoplasm. Its subcellular location is the preautophagosomal structure membrane. Its function is as follows. Involved in autophagic vesicle formation. Conjugation with atg12, through a ubiquitin-like conjugating system involving atg7 as an E1-like activating enzyme and atg10 as an E2-like conjugating enzyme, is essential for its function. The atg12-atg5 conjugate acts as an E3-like enzyme which is required for lipidation of atg8 and its association to the vesicle membranes. In Dictyostelium discoideum (Social amoeba), this protein is Autophagy protein 5 (atg5).